Reading from the N-terminus, the 357-residue chain is MEYKRFKTRQIKVGNVLIGGDAPISVQSMLFTKTRDIEGSLEQINRLYFAGANIVRLACLDMADARALKEIKAKSPLPLIVDIHFNHNLAVYCAEFIDGVRINPGNIGSKENIKEVVKACKERGIPIRIGINHGSIEKQFSDKFGYGVDAMLESAMYNIKLLEDLDFFDIKISMKTSDAQKTIEAYERLRPLCDYPFHLGVTEAGTKFHSTVKSSIALGNLLLKGIGDTMRVSMTGELEEEIRVARAILQDSGVQKSGVNIISCPTCGRIQSDLLSAIKIVEEKTKHIKEPLNISVMGCVVNALGEAKGADVAIAFGKNQGLVIRHGEVVAKLKESELVDRFLAEVEDEVKSRAVKE.

Residues cysteine 264, cysteine 267, cysteine 299, and glutamate 306 each coordinate [4Fe-4S] cluster.

This sequence belongs to the IspG family. The cofactor is [4Fe-4S] cluster.

It carries out the reaction (2E)-4-hydroxy-3-methylbut-2-enyl diphosphate + oxidized [flavodoxin] + H2O + 2 H(+) = 2-C-methyl-D-erythritol 2,4-cyclic diphosphate + reduced [flavodoxin]. The protein operates within isoprenoid biosynthesis; isopentenyl diphosphate biosynthesis via DXP pathway; isopentenyl diphosphate from 1-deoxy-D-xylulose 5-phosphate: step 5/6. Converts 2C-methyl-D-erythritol 2,4-cyclodiphosphate (ME-2,4cPP) into 1-hydroxy-2-methyl-2-(E)-butenyl 4-diphosphate. The sequence is that of 4-hydroxy-3-methylbut-2-en-1-yl diphosphate synthase (flavodoxin) from Campylobacter jejuni (strain RM1221).